Reading from the N-terminus, the 141-residue chain is Large ribosomal subunit protein uL11 (141 aa).

This sequence belongs to the universal ribosomal protein uL11 family. As to quaternary structure, part of the ribosomal stalk of the 50S ribosomal subunit. Interacts with L10 and the large rRNA to form the base of the stalk. L10 forms an elongated spine to which L12 dimers bind in a sequential fashion forming a multimeric L10(L12)X complex. One or more lysine residues are methylated.

Forms part of the ribosomal stalk which helps the ribosome interact with GTP-bound translation factors. The sequence is that of Large ribosomal subunit protein uL11 from Maridesulfovibrio salexigens (strain ATCC 14822 / DSM 2638 / NCIMB 8403 / VKM B-1763) (Desulfovibrio salexigens).